We begin with the raw amino-acid sequence, 422 residues long: Enolase (422 aa).

Gln-162 serves as a coordination point for (2R)-2-phosphoglycerate. The active-site Proton donor is the Glu-204. Residues Asp-241, Glu-284, and Asp-311 each coordinate Mg(2+). (2R)-2-phosphoglycerate contacts are provided by Lys-336, Arg-365, Ser-366, and Lys-387. Lys-336 (proton acceptor) is an active-site residue.

This sequence belongs to the enolase family. Component of the RNA degradosome, a multiprotein complex involved in RNA processing and mRNA degradation. Requires Mg(2+) as cofactor.

The protein resides in the cytoplasm. The protein localises to the secreted. It is found in the cell surface. The enzyme catalyses (2R)-2-phosphoglycerate = phosphoenolpyruvate + H2O. The protein operates within carbohydrate degradation; glycolysis; pyruvate from D-glyceraldehyde 3-phosphate: step 4/5. In terms of biological role, catalyzes the reversible conversion of 2-phosphoglycerate (2-PG) into phosphoenolpyruvate (PEP). It is essential for the degradation of carbohydrates via glycolysis. This is Enolase from Legionella pneumophila (strain Corby).